A 430-amino-acid polypeptide reads, in one-letter code: Trigger factor (430 aa).

A PPIase FKBP-type domain is found at 157-242 (GDLVALETWS…AVEVSEPVLP (86 aa)).

Belongs to the FKBP-type PPIase family. Tig subfamily.

It localises to the cytoplasm. It carries out the reaction [protein]-peptidylproline (omega=180) = [protein]-peptidylproline (omega=0). In terms of biological role, involved in protein export. Acts as a chaperone by maintaining the newly synthesized protein in an open conformation. Functions as a peptidyl-prolyl cis-trans isomerase. This Xanthomonas campestris pv. campestris (strain B100) protein is Trigger factor.